Here is a 320-residue protein sequence, read N- to C-terminus: GTP 3',8-cyclase (320 aa).

One can recognise a Radical SAM core domain in the interval 5–225 (QFDRKINYLR…IQLIKKDEKA (221 aa)). R14 provides a ligand contact to GTP. Residues C21 and C25 each contribute to the [4Fe-4S] cluster site. Y27 contacts S-adenosyl-L-methionine. Position 28 (C28) interacts with [4Fe-4S] cluster. R64 is a binding site for GTP. G68 contributes to the S-adenosyl-L-methionine binding site. Residue T95 participates in GTP binding. S119 contacts S-adenosyl-L-methionine. Residue K155 coordinates GTP. M189 is a binding site for S-adenosyl-L-methionine. Residues C248 and C251 each coordinate [4Fe-4S] cluster. 253–255 (RIR) is a GTP binding site. C265 is a binding site for [4Fe-4S] cluster.

It belongs to the radical SAM superfamily. MoaA family. As to quaternary structure, monomer and homodimer. The cofactor is [4Fe-4S] cluster.

It catalyses the reaction GTP + AH2 + S-adenosyl-L-methionine = (8S)-3',8-cyclo-7,8-dihydroguanosine 5'-triphosphate + 5'-deoxyadenosine + L-methionine + A + H(+). It functions in the pathway cofactor biosynthesis; molybdopterin biosynthesis. Its function is as follows. Catalyzes the cyclization of GTP to (8S)-3',8-cyclo-7,8-dihydroguanosine 5'-triphosphate. In Campylobacter jejuni subsp. doylei (strain ATCC BAA-1458 / RM4099 / 269.97), this protein is GTP 3',8-cyclase.